The sequence spans 257 residues: Ribosome maturation factor RimP (257 aa).

The tract at residues 182 to 257 (LRRGGPPAAD…SRLKDRDSLH (76 aa)) is disordered. Acidic residues predominate over residues 191–205 (DEADEAEEAEDEEVA). A compositionally biased stretch (low complexity) spans 224–236 (KASPAAKPQKQAR).

Belongs to the RimP family.

It localises to the cytoplasm. Functionally, required for maturation of 30S ribosomal subunits. The chain is Ribosome maturation factor RimP from Methylobacterium radiotolerans (strain ATCC 27329 / DSM 1819 / JCM 2831 / NBRC 15690 / NCIMB 10815 / 0-1).